We begin with the raw amino-acid sequence, 72 residues long: Translational regulator CsrA (72 aa).

Belongs to the CsrA/RsmA family. Homodimer; the beta-strands of each monomer intercalate to form a hydrophobic core, while the alpha-helices form wings that extend away from the core.

It localises to the cytoplasm. Its function is as follows. A translational regulator that binds mRNA to regulate translation initiation and/or mRNA stability. Usually binds in the 5'-UTR at or near the Shine-Dalgarno sequence preventing ribosome-binding, thus repressing translation. Its main target seems to be the major flagellin gene, while its function is anatagonized by FliW. The chain is Translational regulator CsrA from Clostridium botulinum (strain ATCC 19397 / Type A).